The chain runs to 51 residues: ATP synthase protein 8 (51 aa).

The chain crosses the membrane as a helical span at residues 7–27 (LNWAMMTIMFSLSLLVSMIIL).

This sequence belongs to the ATPase protein 8 family. In terms of assembly, F-type ATPases have 2 components, CF(1) - the catalytic core - and CF(0) - the membrane proton channel.

It is found in the mitochondrion membrane. Mitochondrial membrane ATP synthase (F(1)F(0) ATP synthase or Complex V) produces ATP from ADP in the presence of a proton gradient across the membrane which is generated by electron transport complexes of the respiratory chain. F-type ATPases consist of two structural domains, F(1) - containing the extramembraneous catalytic core and F(0) - containing the membrane proton channel, linked together by a central stalk and a peripheral stalk. During catalysis, ATP synthesis in the catalytic domain of F(1) is coupled via a rotary mechanism of the central stalk subunits to proton translocation. Part of the complex F(0) domain. Minor subunit located with subunit a in the membrane. This chain is ATP synthase protein 8 (MT-ATP8), found in Limulus polyphemus (Atlantic horseshoe crab).